We begin with the raw amino-acid sequence, 232 residues long: Large ribosomal subunit protein uL1 (232 aa).

It belongs to the universal ribosomal protein uL1 family. Part of the 50S ribosomal subunit.

Its function is as follows. Binds directly to 23S rRNA. The L1 stalk is quite mobile in the ribosome, and is involved in E site tRNA release. In terms of biological role, protein L1 is also a translational repressor protein, it controls the translation of the L11 operon by binding to its mRNA. In Bacillus cereus (strain ATCC 14579 / DSM 31 / CCUG 7414 / JCM 2152 / NBRC 15305 / NCIMB 9373 / NCTC 2599 / NRRL B-3711), this protein is Large ribosomal subunit protein uL1.